We begin with the raw amino-acid sequence, 199 residues long: Charged multivesicular body protein 1B1 (199 aa).

Residues 10–48 are a coiled coil; it reads NLKFAAKELNRSSKKCDKEEKAEKAKIKKAIQKGNMEVA. The segment at 132–156 is interaction with IST1; sequence MEDTMSSTTTLTTPQNQVDMLLQEM. The segment at 167–199 is disordered; that stretch reads ELPQGQTGSVGTSVASAEQDELSQRLARLRDQV. Over residues 170-182 the composition is skewed to polar residues; it reads QGQTGSVGTSVAS. The segment at 174–199 is interaction with SPAST; it reads GSVGTSVASAEQDELSQRLARLRDQV. Positions 178–199 form a coiled coil; sequence TSVASAEQDELSQRLARLRDQV. Positions 180-196 are interaction with VPS4A, MITD1 and STAMBP; the sequence is VASAEQDELSQRLARLR. Residues 180-199 are interaction with VTA1; that stretch reads VASAEQDELSQRLARLRDQV. An interaction with VPS4B region spans residues 183 to 199; sequence AEQDELSQRLARLRDQV. The short motif at 186 to 196 is the MIT-interacting motif element; the sequence is DELSQRLARLR.

This sequence belongs to the SNF7 family. As to quaternary structure, probable peripherally associated component of the endosomal sorting required for transport complex III (ESCRT-III). ESCRT-III components are thought to multimerize to form a flat lattice on the perimeter membrane of the endosome. Several assembly forms of ESCRT-III may exist that interact and act sequentially. Interacts with CHMP1A. Interacts with VTA1; the interaction probably involves the open conformation of CHMP1B. Interacts with CHMP2A. Interacts with VPS4A; the interaction is direct. Interacts with VPS4B; the interaction is direct. Interacts with SPAST (via MIT domain); the interaction is direct. Interacts with IST1. Interacts with MITD1. Interacts with STAMBP.

The protein localises to the cytoplasm. It is found in the cytosol. Its subcellular location is the endosome. It localises to the late endosome membrane. In terms of biological role, probable peripherally associated component of the endosomal sorting required for transport complex III (ESCRT-III) which is involved in multivesicular bodies (MVBs) formation and sorting of endosomal cargo proteins into MVBs. MVBs contain intraluminal vesicles (ILVs) that are generated by invagination and scission from the limiting membrane of the endosome and mostly are delivered to lysosomes enabling degradation of membrane proteins, such as stimulated growth factor receptors, lysosomal enzymes and lipids. The MVB pathway appears to require the sequential function of ESCRT-O, -I,-II and -III complexes. ESCRT-III proteins mostly dissociate from the invaginating membrane before the ILV is released. The ESCRT machinery also functions in topologically equivalent membrane fission events, such as the terminal stages of cytokinesis. ESCRT-III proteins are believed to mediate the necessary vesicle extrusion and/or membrane fission activities, possibly in conjunction with the AAA ATPase VPS4. Involved in cytokinesis. Involved in recruiting VPS4A and/or VPS4B and SPAST to the midbody of dividing cells. The protein is Charged multivesicular body protein 1B1 of Mus musculus (Mouse).